Reading from the N-terminus, the 797-residue chain is Mitochondrial inner membrane m-AAA protease component AFG3L2 (797 aa).

A mitochondrion-targeting transit peptide spans 1–38; that stretch reads MAHRCLRLWGRGGCWPRGLQQLLVPGGVGPGEQPCLRT. Residues 39–66 constitute a propeptide, removed in mature form; it reads LYRFVTTQARASRNSLLTDIIAAYQRFC. Over 39–142 the chain is Mitochondrial matrix; sequence LYRFVTTQAR…KGDIPWDDKD (104 aa). Residues 76 to 126 are disordered; that stretch reads YFPNGKNGKKASEPKEVMGEKKESKPAATTRSSGGGGGGGGKRGGKKDDSH. A compositionally biased stretch (basic and acidic residues) spans 85–100; the sequence is KASEPKEVMGEKKESK. Residues 108-117 show a composition bias toward gly residues; that stretch reads SGGGGGGGGK. At Lys-117 the chain carries N6-succinyllysine. The chain crosses the membrane as a helical span at residues 143–163; it reads FRMFFLWTALFWGGVMFYLLL. Residues 164–250 are Mitochondrial intermembrane-facing; that stretch reads KRSGREITWK…VPVVYIAESD (87 aa). A helical transmembrane segment spans residues 251 to 271; sequence GSFLLSMLPTVLIIAFLLYTI. Over 272–797 the chain is Mitochondrial matrix; that stretch reads RRGPAGIGRT…EEPPGEKVAN (526 aa). ATP is bound by residues Val-310, Ala-311, Thr-352, Gly-353, Lys-354, Thr-355, Leu-356, and His-490. His-574 contacts Zn(2+). Glu-575 is an active-site residue. His-578 and Asp-649 together coordinate Zn(2+). The interval 759 to 797 is disordered; that stretch reads FVEGTGSLDEDTSLPEGLKDWNKEREKEKEEPPGEKVAN. The segment covering 775-797 has biased composition (basic and acidic residues); the sequence is GLKDWNKEREKEKEEPPGEKVAN.

This sequence in the N-terminal section; belongs to the AAA ATPase family. The protein in the C-terminal section; belongs to the peptidase M41 family. In terms of assembly, homohexamer. Forms heterohexamers with SPG7. The m-AAA protease is either composed of homohexamers of AFG3L2 or heterohexamers of AFG3L2 and SPG7. Interacts with MAIP1. Interacts with DNAJC19. Interacts with PHB2. It depends on Zn(2+) as a cofactor. Upon import into the mitochondrion, the N-terminal transit peptide is cleaved to generate an intermediate form which undergoes autocatalytic proteolytic processing to generate the proteolytically active mature form. Ubiquitous. Highly expressed in the cerebellar Purkinje cells.

It localises to the mitochondrion inner membrane. It carries out the reaction ATP + H2O = ADP + phosphate + H(+). Functionally, catalytic component of the m-AAA protease, a protease that plays a key role in proteostasis of inner mitochondrial membrane proteins, and which is essential for axonal and neuron development. AFG3L2 possesses both ATPase and protease activities: the ATPase activity is required to unfold substrates, threading them into the internal proteolytic cavity for hydrolysis into small peptide fragments. The m-AAA protease carries out quality control in the inner membrane of the mitochondria by mediating degradation of mistranslated or misfolded polypeptides. The m-AAA protease complex also promotes the processing and maturation of mitochondrial proteins, such as MRPL32/bL32m, PINK1 and SP7. Mediates protein maturation of the mitochondrial ribosomal subunit MRPL32/bL32m by catalyzing the cleavage of the presequence of MRPL32/bL32m prior to assembly into the mitochondrial ribosome. Required for SPG7 maturation into its active mature form after SPG7 cleavage by mitochondrial-processing peptidase (MPP). Required for the maturation of PINK1 into its 52kDa mature form after its cleavage by mitochondrial-processing peptidase (MPP). Acts as a regulator of calcium in neurons by mediating degradation of SMDT1/EMRE before its assembly with the uniporter complex, limiting the availability of SMDT1/EMRE for MCU assembly and promoting efficient assembly of gatekeeper subunits with MCU. Promotes the proteolytic degradation of GHITM upon hyperpolarization of mitochondria: progressive GHITM degradation leads to respiratory complex I degradation and broad reshaping of the mitochondrial proteome by AFG3L2. Also acts as a regulator of mitochondrial glutathione homeostasis by mediating cleavage and degradation of SLC25A39. SLC25A39 cleavage is prevented when SLC25A39 binds iron-sulfur. Involved in the regulation of OMA1-dependent processing of OPA1. May act by mediating processing of OMA1 precursor, participating in OMA1 maturation. The chain is Mitochondrial inner membrane m-AAA protease component AFG3L2 from Homo sapiens (Human).